Here is a 158-residue protein sequence, read N- to C-terminus: Transcription elongation factor GreA (158 aa).

Belongs to the GreA/GreB family.

Functionally, necessary for efficient RNA polymerase transcription elongation past template-encoded arresting sites. The arresting sites in DNA have the property of trapping a certain fraction of elongating RNA polymerases that pass through, resulting in locked ternary complexes. Cleavage of the nascent transcript by cleavage factors such as GreA or GreB allows the resumption of elongation from the new 3'terminus. GreA releases sequences of 2 to 3 nucleotides. This Allorhizobium ampelinum (strain ATCC BAA-846 / DSM 112012 / S4) (Agrobacterium vitis (strain S4)) protein is Transcription elongation factor GreA.